The primary structure comprises 132 residues: Small ribosomal subunit protein uS8 (132 aa).

Belongs to the universal ribosomal protein uS8 family. In terms of assembly, part of the 30S ribosomal subunit. Contacts proteins S5 and S12.

Functionally, one of the primary rRNA binding proteins, it binds directly to 16S rRNA central domain where it helps coordinate assembly of the platform of the 30S subunit. The chain is Small ribosomal subunit protein uS8 from Stenotrophomonas maltophilia (strain R551-3).